The following is a 41-amino-acid chain: Large ribosomal subunit protein bL36 (41 aa).

Belongs to the bacterial ribosomal protein bL36 family.

The polypeptide is Large ribosomal subunit protein bL36 (Sinorhizobium medicae (strain WSM419) (Ensifer medicae)).